Consider the following 258-residue polypeptide: Venom plasminogen activator GPV-PA (258 aa).

An N-terminal signal peptide occupies residues 1–18 (MVLIRVLANLLILQLSYA). The propeptide occupies 19-24 (QKSSEL). Residues 25-249 (VFGGRPCNIN…YTDWIQSIIA (225 aa)) form the Peptidase S1 domain. 6 disulfides stabilise this stretch: Cys31–Cys163, Cys50–Cys66, Cys98–Cys256, Cys142–Cys210, Cys174–Cys189, and Cys200–Cys225. N-linked (GlcNAc...) asparagine glycosylation occurs at Asn44. Catalysis depends on charge relay system residues His65 and Asp110. N-linked (GlcNAc...) asparagine glycosylation is found at Asn121 and Asn185. The active-site Charge relay system is the Ser204.

The protein belongs to the peptidase S1 family. Snake venom subfamily. As to quaternary structure, monomer. Expressed by the venom gland.

The protein localises to the secreted. Snake venom serine protease that activates plasminogen. In Trimeresurus albolabris (White-lipped pit viper), this protein is Venom plasminogen activator GPV-PA.